Reading from the N-terminus, the 313-residue chain is Acetyl-coenzyme A carboxylase carboxyl transferase subunit beta, chloroplastic (313 aa).

The 267-residue stretch at 47–313 (LWTRCDNCEN…SAPCRRSNNS (267 aa)) folds into the CoA carboxyltransferase N-terminal domain. 4 residues coordinate Zn(2+): Cys-51, Cys-54, Cys-70, and Cys-73. The segment at 51–73 (CDNCENMLYIRFLRQNKRICEEC) adopts a C4-type zinc-finger fold.

It belongs to the AccD/PCCB family. Acetyl-CoA carboxylase is a heterohexamer composed of biotin carboxyl carrier protein, biotin carboxylase and 2 subunits each of ACCase subunit alpha and ACCase plastid-coded subunit beta (accD). It depends on Zn(2+) as a cofactor.

It is found in the plastid. Its subcellular location is the chloroplast stroma. It carries out the reaction N(6)-carboxybiotinyl-L-lysyl-[protein] + acetyl-CoA = N(6)-biotinyl-L-lysyl-[protein] + malonyl-CoA. The protein operates within lipid metabolism; malonyl-CoA biosynthesis; malonyl-CoA from acetyl-CoA: step 1/1. Functionally, component of the acetyl coenzyme A carboxylase (ACC) complex. Biotin carboxylase (BC) catalyzes the carboxylation of biotin on its carrier protein (BCCP) and then the CO(2) group is transferred by the transcarboxylase to acetyl-CoA to form malonyl-CoA. This chain is Acetyl-coenzyme A carboxylase carboxyl transferase subunit beta, chloroplastic, found in Anthoceros angustus (Hornwort).